The sequence spans 143 residues: Snake venom vascular endothelial growth factor toxin (143 aa).

Positions 1–24 (MAVYLLAVAILFCIQGWPSGTVQG) are cleaved as a signal peptide. Residue glutamate 25 is modified to Pyrrolidone carboxylic acid (Glu). Intrachain disulfides connect cysteine 38–cysteine 80, cysteine 69–cysteine 115, and cysteine 73–cysteine 117. Residues 117–143 (CRPRSPGDVNDGRNPKEGEPRARFPFV) are disordered.

This sequence belongs to the PDGF/VEGF growth factor family. Snake venom VEGF subfamily. Homodimer; disulfide-linked. Interacts with VEGF receptor-1 (FLT1) with a high affinity, whereas it binds to VEGF receptor-2 (KDR) with a low affinity. Does not bind to VEGFR-3/FLT4 and neuropilin-1 (NRP1). Expressed by the venom gland.

The protein resides in the secreted. Functionally, snake venom VEGFs may contribute to venom dispersion and prey subjugation by inducing vascular permeability and hypotension. This protein activates the vascular endothelial growth factor receptor-1 (VEGFR-1/FLT1), and consequently promotes the proliferation and tissue factor production of endothelial cells, the neovascularization in the chicken chorioallantoic membrane, and increases vascular permeability. Also stimulates tissue-factor production and human monocyte chemotaxis. The sequence is that of Snake venom vascular endothelial growth factor toxin from Protobothrops mucrosquamatus (Taiwan habu).